Reading from the N-terminus, the 80-residue chain is Large ribosomal subunit protein uL24 (80 aa).

It belongs to the universal ribosomal protein uL24 family. Part of the 50S ribosomal subunit.

Its function is as follows. One of two assembly initiator proteins, it binds directly to the 5'-end of the 23S rRNA, where it nucleates assembly of the 50S subunit. In terms of biological role, one of the proteins that surrounds the polypeptide exit tunnel on the outside of the subunit. This chain is Large ribosomal subunit protein uL24, found in Chlorobium phaeobacteroides (strain DSM 266 / SMG 266 / 2430).